A 374-amino-acid polypeptide reads, in one-letter code: Cell division cycle-associated protein 7 (374 aa).

Disordered stretches follow at residues 53–110 and 138–208; these read ANRE…EDES and SFPG…EEDK. Ser142 carries the post-translational modification Phosphoserine. Residues 146-170 form an interaction with MYC region; that stretch reads RRSLPGPSSRPKTPRRRTFPGVACR. Positions 160–176 match the Nuclear localization signal motif; the sequence is RRRTFPGVACRRNPERR. Residue Thr163 is modified to Phosphothreonine. Ser190 is subject to Phosphoserine. Thr196 is modified (phosphothreonine). Residues 196–207 show a composition bias toward acidic residues; that stretch reads TEEEEEEEEEED. Lys208 participates in a covalent cross-link: Glycyl lysine isopeptide (Lys-Gly) (interchain with G-Cter in SUMO2). Ser217 bears the Phosphoserine mark. The interval 250–374 is mediates transcriptional activity; that stretch reads EEELENICNN…SLKQEFEMQG (125 aa).

In terms of assembly, interacts with MYC (via C-terminus), YWHAE and YWHAZ. Post-translationally, phosphorylation at Thr-163 promotes interaction with YWHAE and YWHAZ, dissociation from MYC and sequestration in the cytoplasm.

It is found in the nucleus. The protein resides in the cytoplasm. Functionally, participates in MYC-mediated cell transformation and apoptosis; induces anchorage-independent growth and clonogenicity in lymphoblastoid cells. Insufficient to induce tumorigenicity when overexpressed but contributes to MYC-mediated tumorigenesis. May play a role as transcriptional regulator. The polypeptide is Cell division cycle-associated protein 7 (CDCA7) (Bos taurus (Bovine)).